The primary structure comprises 235 residues: Large ribosomal subunit protein uL1 (235 aa).

Belongs to the universal ribosomal protein uL1 family. Part of the 50S ribosomal subunit.

Its function is as follows. Binds directly to 23S rRNA. The L1 stalk is quite mobile in the ribosome, and is involved in E site tRNA release. Protein L1 is also a translational repressor protein, it controls the translation of the L11 operon by binding to its mRNA. This is Large ribosomal subunit protein uL1 from Fervidobacterium nodosum (strain ATCC 35602 / DSM 5306 / Rt17-B1).